A 208-amino-acid chain; its full sequence is UPF0323 lipoprotein HH_0014 (208 aa).

Positions 1–26 (MKHIHKIKNYAMVGGLGVMAVFALNA) are cleaved as a signal peptide. Cysteine 27 carries the N-palmitoyl cysteine lipid modification. A lipid anchor (S-diacylglycerol cysteine) is attached at cysteine 27. The disordered stretch occupies residues 148–208 (ANSQRNYKSP…TNRNTGSMGS (61 aa)). Composition is skewed to low complexity over residues 169–185 (SAKT…SGKS) and 193–208 (SSQS…SMGS).

Belongs to the UPF0323 family.

It is found in the cell membrane. This Helicobacter hepaticus (strain ATCC 51449 / 3B1) protein is UPF0323 lipoprotein HH_0014.